The primary structure comprises 869 residues: Ubiquitin carboxyl-terminal hydrolase 29 (869 aa).

Composition is skewed to polar residues over residues 104–120 (SSTP…MSSQ) and 140–150 (SLNTTPESGTP). Residues 104–226 (SSTPCESQQP…KAVTLREQEK (123 aa)) form a disordered region. The span at 187–200 (VNKDIPKENTPDQK) shows a compositional bias: basic and acidic residues. A compositionally biased stretch (basic residues) spans 201-212 (KKSRRYYSRNRG). The segment covering 213-226 (GKAEKAVTLREQEK) has biased composition (basic and acidic residues). The 538-residue stretch at 289 to 826 (EGFPNLGNTC…SGYIFFYMHN (538 aa)) folds into the USP domain. Cys298 functions as the Nucleophile in the catalytic mechanism. Residues 723–754 (SQEDPEKDLSRSPELQEDDPHSFAFGSDDSKD) are disordered. Catalysis depends on His781, which acts as the Proton acceptor.

This sequence belongs to the peptidase C19 family. As to expression, predominantly expressed in brain and testis. Highest expression levels in adult brain, especially in the cerebral cortex and hippocampus, and in the forebrain, face, and limb buds of midgestation mouse embryos.

The protein resides in the cytoplasm. It is found in the perinuclear region. The catalysed reaction is Thiol-dependent hydrolysis of ester, thioester, amide, peptide and isopeptide bonds formed by the C-terminal Gly of ubiquitin (a 76-residue protein attached to proteins as an intracellular targeting signal).. Functionally, deubiquitinase involved in innate antiviral immunity by mediating 'Lys-48'-linked deubiquitination of CGAS, thereby promoting its stabilization. The sequence is that of Ubiquitin carboxyl-terminal hydrolase 29 from Mus musculus (Mouse).